A 155-amino-acid chain; its full sequence is Small ribosomal subunit protein uS7 (155 aa).

Belongs to the universal ribosomal protein uS7 family. As to quaternary structure, part of the 30S ribosomal subunit. Contacts proteins S9 and S11.

Functionally, one of the primary rRNA binding proteins, it binds directly to 16S rRNA where it nucleates assembly of the head domain of the 30S subunit. Is located at the subunit interface close to the decoding center, probably blocks exit of the E-site tRNA. In Chlorobium phaeobacteroides (strain DSM 266 / SMG 266 / 2430), this protein is Small ribosomal subunit protein uS7.